The sequence spans 707 residues: NADP(+)-dependent formate dehydrogenase subunit beta (707 aa).

Heterotetramer composed of two alpha (FdhA) and two beta (FdhB) subunits.

The protein localises to the cytoplasm. The enzyme catalyses formate + NADP(+) = CO2 + NADPH. Activity is very sensitive to oxygen. The activity in growing cells is enhanced when selenite and molybdate are added together to the growth medium. Tungstate replaces and is better than molybdate. Selenite is incorporated into the enzyme. Requires a sulfhydryl compound for activity. Inhibited by cyanide, EDTA, hypophosphite and mercaptoethanol. Sulfite inhibits the activity with NADP but not with methyl viologen as electron acceptor. Functionally, component of a dehydrogenase that catalyzes the NADP-dependent reduction of CO(2) to formate, the first step in the synthesis of the methyl group of acetate during synthesis of acetate from CO(2). In vitro, can use methyl viologen and benzyl viologen in addition to its natural electron acceptor. This is NADP(+)-dependent formate dehydrogenase subunit beta from Moorella thermoacetica (Clostridium thermoaceticum).